Reading from the N-terminus, the 329-residue chain is MAQSTLYSRVLGTGSYLPPDRVTNQQLTDRLAKEGIETSDEWIVARTGIHARHFAAPDVTTSDLALEASRRAIEAAGIDPQSIDLIIVATSTPDFVFPSTACLLQNKLGIKNGGAAFDVQAVCSGFAYAMATADSFIRSGQHRTALVIGAETFSRILDFKDRTTCVLFGDGAGAVILSASEEPGVLGSALHADGSYSHILCTPGNVNRGVIEGSAFLYMDGQAVFKLAVNVLEKVAIEALAKANLAPEQIDWLIPHQANIRIMTSTCRKLGLPQERMVVTVDQHGNTSAASIPLAFDTAVRDGRIQRGQHVLIEGVGGGFTWGASVFRY.

Residues C123 and H256 contribute to the active site. The tract at residues 257–261 (QANIR) is ACP-binding. Residue N286 is part of the active site.

The protein belongs to the thiolase-like superfamily. FabH family. In terms of assembly, homodimer.

It is found in the cytoplasm. The catalysed reaction is malonyl-[ACP] + acetyl-CoA + H(+) = 3-oxobutanoyl-[ACP] + CO2 + CoA. Its pathway is lipid metabolism; fatty acid biosynthesis. Functionally, catalyzes the condensation reaction of fatty acid synthesis by the addition to an acyl acceptor of two carbons from malonyl-ACP. Catalyzes the first condensation reaction which initiates fatty acid synthesis and may therefore play a role in governing the total rate of fatty acid production. Possesses both acetoacetyl-ACP synthase and acetyl transacylase activities. Its substrate specificity determines the biosynthesis of branched-chain and/or straight-chain of fatty acids. The protein is Beta-ketoacyl-[acyl-carrier-protein] synthase III of Burkholderia lata (strain ATCC 17760 / DSM 23089 / LMG 22485 / NCIMB 9086 / R18194 / 383).